The sequence spans 602 residues: Arginine--tRNA ligase (602 aa).

Residues 124–134 (ANPTGPVHVGR) carry the 'HIGH' region motif.

The protein belongs to the class-I aminoacyl-tRNA synthetase family.

It is found in the cytoplasm. The enzyme catalyses tRNA(Arg) + L-arginine + ATP = L-arginyl-tRNA(Arg) + AMP + diphosphate. The sequence is that of Arginine--tRNA ligase from Halorubrum lacusprofundi (strain ATCC 49239 / DSM 5036 / JCM 8891 / ACAM 34).